Consider the following 353-residue polypeptide: UPF0283 membrane protein YcjF (353 aa).

The next 3 helical transmembrane spans lie at 70 to 90, 100 to 120, and 213 to 233; these read MVMG…VQWT, VALG…GSVV, and ESTL…FIAW.

This sequence belongs to the UPF0283 family.

It is found in the cell inner membrane. The chain is UPF0283 membrane protein YcjF from Salmonella schwarzengrund (strain CVM19633).